Reading from the N-terminus, the 518-residue chain is Receptor-interacting serine/threonine-protein kinase 3 (518 aa).

S2 carries the phosphoserine modification. The Protein kinase domain maps to 21–287 (LENQELVGKG…ECLPKTDEVF (267 aa)). 27–35 (VGKGGFGTV) serves as a coordination point for ATP. A Glycyl lysine isopeptide (Lys-Gly) (interchain with G-Cter in ubiquitin) cross-link involves residue K42. Residue K50 participates in ATP binding. D142 functions as the Proton acceptor in the catalytic mechanism. A Phosphoserine modification is found at S164. A Phosphothreonine modification is found at T182. A phosphoserine; by autocatalysis mark is found at S199 and S227. Residue T252 is modified to Phosphothreonine. S299 is modified (phosphoserine). A Phosphothreonine modification is found at T333. Residues K351 and K363 each participate in a glycyl lysine isopeptide (Lys-Gly) (interchain with G-Cter in ubiquitin) cross-link. The interval 355–443 (EEPPSSVPKK…WSCRTPEPNP (89 aa)) is disordered. Residues 384–408 (TAGTSSDSMAQPPQTPETSTFRNQM) show a composition bias toward polar residues. A Phosphoserine modification is found at S389. The residue at position 401 (T401) is a Phosphothreonine. An RIP homotypic interaction motif (RHIM) motif is present at residues 450 to 466 (VNIYNCSGVQVGDNNYL). Residues 476-518 (TWGLAPSGKGRGLQHPPPVGSQEGPKDPEAWSRPQGWYNHSGK) form a disordered region. Residue K518 forms a Glycyl lysine isopeptide (Lys-Gly) (interchain with G-Cter in ubiquitin) linkage.

The protein belongs to the protein kinase superfamily. TKL Ser/Thr protein kinase family. Interacts (via RIP homotypic interaction motif) with RIPK1 (via RIP homotypic interaction motif); this interaction induces RIPK1 phosphorylation and formation of a RIPK1-RIPK3 necrosis-inducing complex. Interacts with MLKL; the interaction is direct and triggers necroptosis. Interacts with ZBP1 (via RIP homotypic interaction motif); interaction with ZBP1 activates RIPK3, triggering necroptosis. Upon TNF-induced necrosis, the RIPK1-RIPK3 dimer further interacts with PGAM5 and MLKL; the formation of this complex leads to PGAM5 phosphorylation and increase in PGAM5 phosphatase activity. Binds TRAF2 and is recruited to the TNFR-1 signaling complex. Interacts with PYGL, GLUL and GLUD1; these interactions result in activation of these metabolic enzymes. Interacts with BIRC2/c-IAP1, BIRC3/c-IAP2 and XIAP/BIRC4. Interacts with ARHGEF2. Interacts with PELI1 (via atypical FHA domain); the phosphorylated form at Thr-182 binds preferentially to PELI1. Interacts with BUB1B, TRAF2 and STUB1. Interacts with CASP6. Component of the AIM2 PANoptosome complex, a multiprotein complex that drives inflammatory cell death (PANoptosis). As to quaternary structure, (Microbial infection) Interacts (via RIP homotypic interaction motif/RHIM) with herpes simplex virus 1/HHV-1 protein RIR1/ICP6 (via RHIM); this interaction may induce heteromeric amyloid assemblies and prevent necroptosis activation. In terms of assembly, (Microbial infection) Interacts (via RIP homotypic interaction motif/RHIM) with herpes simplex virus 2/HHV-2 protein RIR1/ICP10 (via RHIM); this interaction prevents necroptosis activation. In terms of processing, (Microbial infection) Proteolytically cleaved by S.flexneri OspD3 within the RIP homotypic interaction motif (RHIM), leading to its degradation and inhibition of necroptosis. Post-translationally, RIPK1 and RIPK3 undergo reciprocal auto- and trans-phosphorylation. Autophosphorylated following interaction with ZBP1. Phosphorylation of Ser-199 plays a role in the necroptotic function of RIPK3. Autophosphorylates at Ser-227 following activation by ZBP1: phosphorylation at these sites is a hallmark of necroptosis and is required for binding MLKL. Phosphorylation at Thr-182 is important for its kinase activity, interaction with PELI1 and PELI1-mediated 'Lys-48'-linked polyubiquitination and for its ability to mediate TNF-induced necroptosis. Polyubiquitinated with 'Lys-48' and 'Lys-63'-linked chains by BIRC2/c-IAP1 and BIRC3/c-IAP2, leading to activation of NF-kappa-B. Polyubiquitinated with 'Lys-48'-linked chains by PELI1 leading to its subsequent proteasome-dependent degradation. Ubiquitinated by STUB1 leading to its subsequent proteasome-dependent degradation. Deubiquitinated by USP22. In terms of tissue distribution, highly expressed in the pancreas. Detected at lower levels in heart, placenta, lung and kidney. Expression is significantly increased in colon and lung cancers.

It is found in the cytoplasm. It localises to the cytosol. The protein localises to the nucleus. It carries out the reaction L-seryl-[protein] + ATP = O-phospho-L-seryl-[protein] + ADP + H(+). It catalyses the reaction L-threonyl-[protein] + ATP = O-phospho-L-threonyl-[protein] + ADP + H(+). Its activity is regulated as follows. Activity is stimulated by ZBP1, which senses double-stranded Z-RNA structures. RIPK3-dependent necroptosis is inhibited by RIPK1: RIPK1 prevents the ZBP1-induced activation of RIPK3 via FADD-mediated recruitment of CASP8, which cleaves RIPK1 and limits TNF-induced necroptosis. Its function is as follows. Serine/threonine-protein kinase that activates necroptosis and apoptosis, two parallel forms of cell death. Necroptosis, a programmed cell death process in response to death-inducing TNF-alpha family members, is triggered by RIPK3 following activation by ZBP1. Activated RIPK3 forms a necrosis-inducing complex and mediates phosphorylation of MLKL, promoting MLKL localization to the plasma membrane and execution of programmed necrosis characterized by calcium influx and plasma membrane damage. In addition to TNF-induced necroptosis, necroptosis can also take place in the nucleus in response to orthomyxoviruses infection: following ZBP1 activation, which senses double-stranded Z-RNA structures, nuclear RIPK3 catalyzes phosphorylation and activation of MLKL, promoting disruption of the nuclear envelope and leakage of cellular DNA into the cytosol. Also regulates apoptosis: apoptosis depends on RIPK1, FADD and CASP8, and is independent of MLKL and RIPK3 kinase activity. Phosphorylates RIPK1: RIPK1 and RIPK3 undergo reciprocal auto- and trans-phosphorylation. In some cell types, also able to restrict viral replication by promoting cell death-independent responses. In response to Zika virus infection in neurons, promotes a cell death-independent pathway that restricts viral replication: together with ZBP1, promotes a death-independent transcriptional program that modifies the cellular metabolism via up-regulation expression of the enzyme ACOD1/IRG1 and production of the metabolite itaconate. Itaconate inhibits the activity of succinate dehydrogenase, generating a metabolic state in neurons that suppresses replication of viral genomes. RIPK3 binds to and enhances the activity of three metabolic enzymes: GLUL, GLUD1, and PYGL. These metabolic enzymes may eventually stimulate the tricarboxylic acid cycle and oxidative phosphorylation, which could result in enhanced ROS production. In terms of biological role, (Microbial infection) In case of herpes simplex virus 1/HHV-1 infection, forms heteromeric amyloid structures with HHV-1 protein RIR1/ICP6 which may inhibit RIPK3-mediated necroptosis, thereby preventing host cell death pathway and allowing viral evasion. In Homo sapiens (Human), this protein is Receptor-interacting serine/threonine-protein kinase 3.